The chain runs to 340 residues: TATA-box-binding protein (340 aa).

A disordered region spans residues M1 to M78. Positions P57 to M68 are enriched in low complexity. The segment covering H69–M78 has biased composition (polar residues). A run of 2 repeats spans residues L168 to V244 and V258 to L335.

This sequence belongs to the TBP family. As to quaternary structure, component of the TFIID basal transcription factor complex, composed of TATA-box-binding protein tbp-1, and a number of TBP-associated factors (TAFs). Binds DNA as monomer.

The protein localises to the nucleus. Its function is as follows. The TFIID basal transcription factor complex plays a major role in the initiation of RNA polymerase II (Pol II)-dependent transcription. TFIID recognizes and binds promoters via its subunit tbp-1, a TATA-box-binding protein, and promotes assembly of the pre-initiation complex (PIC). The TFIID complex consists of tbp-1 and TBP-associated factors (TAFs). General transcription factor that functions at the core of the TFIID complex. This is TATA-box-binding protein (tbp-1) from Caenorhabditis elegans.